The primary structure comprises 147 residues: uncharacterized protein (147 aa).

An HTH LytTR-type domain is found at 44–147; that stretch reads LVGYIDKEIH…LKSIKERLSI (104 aa).

Its subcellular location is the cytoplasm. This is an uncharacterized protein from Staphylococcus aureus (strain bovine RF122 / ET3-1).